We begin with the raw amino-acid sequence, 298 residues long: Phosphatidylserine decarboxylase proenzyme (298 aa).

Catalysis depends on charge relay system; for autoendoproteolytic cleavage activity residues Asp-113, His-169, and Ser-256. The Schiff-base intermediate with substrate; via pyruvic acid; for decarboxylase activity role is filled by Ser-256. Ser-256 carries the pyruvic acid (Ser); by autocatalysis modification.

The protein belongs to the phosphatidylserine decarboxylase family. PSD-B subfamily. Prokaryotic type II sub-subfamily. Heterodimer of a large membrane-associated beta subunit and a small pyruvoyl-containing alpha subunit. Requires pyruvate as cofactor. Is synthesized initially as an inactive proenzyme. Formation of the active enzyme involves a self-maturation process in which the active site pyruvoyl group is generated from an internal serine residue via an autocatalytic post-translational modification. Two non-identical subunits are generated from the proenzyme in this reaction, and the pyruvate is formed at the N-terminus of the alpha chain, which is derived from the carboxyl end of the proenzyme. The autoendoproteolytic cleavage occurs by a canonical serine protease mechanism, in which the side chain hydroxyl group of the serine supplies its oxygen atom to form the C-terminus of the beta chain, while the remainder of the serine residue undergoes an oxidative deamination to produce ammonia and the pyruvoyl prosthetic group on the alpha chain. During this reaction, the Ser that is part of the protease active site of the proenzyme becomes the pyruvoyl prosthetic group, which constitutes an essential element of the active site of the mature decarboxylase.

It localises to the cell membrane. The catalysed reaction is a 1,2-diacyl-sn-glycero-3-phospho-L-serine + H(+) = a 1,2-diacyl-sn-glycero-3-phosphoethanolamine + CO2. Its pathway is phospholipid metabolism; phosphatidylethanolamine biosynthesis; phosphatidylethanolamine from CDP-diacylglycerol: step 2/2. In terms of biological role, catalyzes the formation of phosphatidylethanolamine (PtdEtn) from phosphatidylserine (PtdSer). The chain is Phosphatidylserine decarboxylase proenzyme from Desulfitobacterium hafniense (strain Y51).